Consider the following 209-residue polypeptide: uncharacterized protein (209 aa).

Its function is as follows. May influence the expression of the nuc gene. This is an uncharacterized protein from Shigella flexneri.